A 184-amino-acid chain; its full sequence is Peptidyl-tRNA hydrolase (184 aa).

Tyrosine 17 contacts tRNA. The active-site Proton acceptor is histidine 22. TRNA-binding residues include phenylalanine 71, asparagine 73, and asparagine 119.

It belongs to the PTH family. Monomer.

The protein localises to the cytoplasm. It catalyses the reaction an N-acyl-L-alpha-aminoacyl-tRNA + H2O = an N-acyl-L-amino acid + a tRNA + H(+). Functionally, hydrolyzes ribosome-free peptidyl-tRNAs (with 1 or more amino acids incorporated), which drop off the ribosome during protein synthesis, or as a result of ribosome stalling. In terms of biological role, catalyzes the release of premature peptidyl moieties from peptidyl-tRNA molecules trapped in stalled 50S ribosomal subunits, and thus maintains levels of free tRNAs and 50S ribosomes. In Corynebacterium diphtheriae (strain ATCC 700971 / NCTC 13129 / Biotype gravis), this protein is Peptidyl-tRNA hydrolase.